Consider the following 515-residue polypeptide: Chromosomal replication initiator protein DnaA (515 aa).

The segment at 1 to 89 (MVADQAVLSS…LLAISIDANL (89 aa)) is domain I, interacts with DnaA modulators. Positions 89–172 (LQPPRTPSSE…APPSTSAETS (84 aa)) are domain II. 2 disordered regions span residues 90–130 (QPPR…SRRA) and 142–171 (PPAD…SAET). Low complexity-rich tracts occupy residues 102–114 (SSLA…AAAP) and 143–160 (PADV…NGKP). The segment at 173–389 (RLNDRYHFET…GALIRVTAFA (217 aa)) is domain III, AAA+ region. Residues G217, G219, K220, and T221 each coordinate ATP. The tract at residues 390–515 (SLNRQTVDIE…NEIKRKQRGA (126 aa)) is domain IV, binds dsDNA.

This sequence belongs to the DnaA family. As to quaternary structure, oligomerizes as a right-handed, spiral filament on DNA at oriC.

It is found in the cytoplasm. In terms of biological role, plays an essential role in the initiation and regulation of chromosomal replication. ATP-DnaA binds to the origin of replication (oriC) to initiate formation of the DNA replication initiation complex once per cell cycle. Binds the DnaA box (a 9 base pair repeat at the origin) and separates the double-stranded (ds)DNA. Forms a right-handed helical filament on oriC DNA; dsDNA binds to the exterior of the filament while single-stranded (ss)DNA is stabiized in the filament's interior. The ATP-DnaA-oriC complex binds and stabilizes one strand of the AT-rich DNA unwinding element (DUE), permitting loading of DNA polymerase. After initiation quickly degrades to an ADP-DnaA complex that is not apt for DNA replication. Binds acidic phospholipids. This is Chromosomal replication initiator protein DnaA from Micrococcus luteus (strain ATCC 4698 / DSM 20030 / JCM 1464 / CCM 169 / CCUG 5858 / IAM 1056 / NBRC 3333 / NCIMB 9278 / NCTC 2665 / VKM Ac-2230) (Micrococcus lysodeikticus).